Reading from the N-terminus, the 505-residue chain is MAQVINTNSLSLLTQNNLNKSQSSLSSAIERLSSGLRINSAKDDAAGQAIANRFTSNIKGLTQASRNANDGISIAQTTEGALNEINNNLQRVRELSVQATNGTNSDSDLKSIQDEIQQRLEEIDRVSNQTQFNGVKVLSQDNQMKIQVGANDGETITIDLQKIDVKSLGLDGFNVNGPKEATVGDLKSSFKNVTGYDTYAAGADKYRVDINSGAVVTDAVAPDKVYVNAANGQLTTDDAENNTAVDLFKTTKSAAGTAEAKAIAGAIKGGKEGDTFDYKGVTFTIDTKTGDDGNGKVSTTINGEKVTLTVADIAIGAADVNAATLQSSKNVYTSVVNGQFTFDDKTKSESAKLSDLEANNAVKGESKITVNGAEYTANATGDKITLAGKTMFIDKTASGVSTLINEDAAAAKKSTANPLASIDSALSKVDAVRSSLGAIQNRFDSAITNLGNTVTNLNSARSRIEDADYATEVSNMSKAQILQQAGTSVLAQANQVPQNVLSLLR.

It belongs to the bacterial flagellin family.

It is found in the secreted. Its subcellular location is the bacterial flagellum. Flagellin is the subunit protein which polymerizes to form the filaments of bacterial flagella. The protein is Phase 1 flagellin (fliC) of Salmonella naestved.